Reading from the N-terminus, the 432-residue chain is Glutamyl-tRNA reductase (432 aa).

Substrate-binding positions include 49–52 (TCNR), Ser-101, 106–108 (ESQ), and Gln-112. Cys-50 functions as the Nucleophile in the catalytic mechanism. An NADP(+)-binding site is contributed by 181–186 (GAGETI). Residues 410-432 (KPGYHHPTLQTTIVKTDETDPAS) are disordered.

It belongs to the glutamyl-tRNA reductase family. Homodimer.

It catalyses the reaction (S)-4-amino-5-oxopentanoate + tRNA(Glu) + NADP(+) = L-glutamyl-tRNA(Glu) + NADPH + H(+). It participates in porphyrin-containing compound metabolism; protoporphyrin-IX biosynthesis; 5-aminolevulinate from L-glutamyl-tRNA(Glu): step 1/2. Functionally, catalyzes the NADPH-dependent reduction of glutamyl-tRNA(Glu) to glutamate 1-semialdehyde (GSA). The polypeptide is Glutamyl-tRNA reductase (Xylella fastidiosa (strain M23)).